A 458-amino-acid polypeptide reads, in one-letter code: Bifunctional protein GlmU (458 aa).

The interval 1–229 (MNKFAIVLAA…FDESLGVNDR (229 aa)) is pyrophosphorylase. Residues 8-11 (LAAG), lysine 22, glutamine 72, and 77-78 (GT) each bind UDP-N-acetyl-alpha-D-glucosamine. Aspartate 102 is a binding site for Mg(2+). UDP-N-acetyl-alpha-D-glucosamine-binding residues include glycine 139, glutamate 154, asparagine 169, and asparagine 227. Position 227 (asparagine 227) interacts with Mg(2+). Positions 230–250 (VALSQAELTMRKRINHQHMVN) are linker. The interval 251–458 (GVTLIDPATT…AKKMPHYRGQ (208 aa)) is N-acetyltransferase. Positions 332 and 350 each coordinate UDP-N-acetyl-alpha-D-glucosamine. Histidine 362 functions as the Proton acceptor in the catalytic mechanism. UDP-N-acetyl-alpha-D-glucosamine contacts are provided by tyrosine 365 and asparagine 376. Acetyl-CoA-binding residues include alanine 379, serine 404, alanine 422, and arginine 439.

The protein in the N-terminal section; belongs to the N-acetylglucosamine-1-phosphate uridyltransferase family. It in the C-terminal section; belongs to the transferase hexapeptide repeat family. In terms of assembly, homotrimer. Mg(2+) is required as a cofactor.

The protein resides in the cytoplasm. The enzyme catalyses alpha-D-glucosamine 1-phosphate + acetyl-CoA = N-acetyl-alpha-D-glucosamine 1-phosphate + CoA + H(+). It catalyses the reaction N-acetyl-alpha-D-glucosamine 1-phosphate + UTP + H(+) = UDP-N-acetyl-alpha-D-glucosamine + diphosphate. Its pathway is nucleotide-sugar biosynthesis; UDP-N-acetyl-alpha-D-glucosamine biosynthesis; N-acetyl-alpha-D-glucosamine 1-phosphate from alpha-D-glucosamine 6-phosphate (route II): step 2/2. It functions in the pathway nucleotide-sugar biosynthesis; UDP-N-acetyl-alpha-D-glucosamine biosynthesis; UDP-N-acetyl-alpha-D-glucosamine from N-acetyl-alpha-D-glucosamine 1-phosphate: step 1/1. It participates in bacterial outer membrane biogenesis; LPS lipid A biosynthesis. Its function is as follows. Catalyzes the last two sequential reactions in the de novo biosynthetic pathway for UDP-N-acetylglucosamine (UDP-GlcNAc). The C-terminal domain catalyzes the transfer of acetyl group from acetyl coenzyme A to glucosamine-1-phosphate (GlcN-1-P) to produce N-acetylglucosamine-1-phosphate (GlcNAc-1-P), which is converted into UDP-GlcNAc by the transfer of uridine 5-monophosphate (from uridine 5-triphosphate), a reaction catalyzed by the N-terminal domain. The sequence is that of Bifunctional protein GlmU from Lactococcus lactis subsp. lactis (strain IL1403) (Streptococcus lactis).